Reading from the N-terminus, the 377-residue chain is Chaperone protein DnaJ (377 aa).

The J domain occupies 3 to 67 (DYYDLLGVGR…QTRARYDQFG (65 aa)). Residues 133–215 (GQEQEIKIPH…CGGQGVRQVR (83 aa)) form a CR-type zinc finger. 8 residues coordinate Zn(2+): C146, C149, C163, C166, C189, C192, C203, and C206. CXXCXGXG motif repeat units lie at residues 146-153 (CDTCGGSG), 163-170 (CGTCGGAG), 189-196 (CPNCGGTG), and 203-210 (CNACGGQG).

This sequence belongs to the DnaJ family. In terms of assembly, homodimer. It depends on Zn(2+) as a cofactor.

The protein localises to the cytoplasm. Functionally, participates actively in the response to hyperosmotic and heat shock by preventing the aggregation of stress-denatured proteins and by disaggregating proteins, also in an autonomous, DnaK-independent fashion. Unfolded proteins bind initially to DnaJ; upon interaction with the DnaJ-bound protein, DnaK hydrolyzes its bound ATP, resulting in the formation of a stable complex. GrpE releases ADP from DnaK; ATP binding to DnaK triggers the release of the substrate protein, thus completing the reaction cycle. Several rounds of ATP-dependent interactions between DnaJ, DnaK and GrpE are required for fully efficient folding. Also involved, together with DnaK and GrpE, in the DNA replication of plasmids through activation of initiation proteins. This chain is Chaperone protein DnaJ, found in Parasynechococcus marenigrum (strain WH8102).